We begin with the raw amino-acid sequence, 263 residues long: 3-methyl-2-oxobutanoate hydroxymethyltransferase (263 aa).

Residues aspartate 43 and aspartate 82 each contribute to the Mg(2+) site. 3-methyl-2-oxobutanoate is bound by residues 43-44, aspartate 82, and lysine 111; that span reads DS. Glutamate 113 is a Mg(2+) binding site. The active-site Proton acceptor is the glutamate 179.

The protein belongs to the PanB family. In terms of assembly, homodecamer; pentamer of dimers. Mg(2+) is required as a cofactor.

Its subcellular location is the cytoplasm. The enzyme catalyses 3-methyl-2-oxobutanoate + (6R)-5,10-methylene-5,6,7,8-tetrahydrofolate + H2O = 2-dehydropantoate + (6S)-5,6,7,8-tetrahydrofolate. It functions in the pathway cofactor biosynthesis; (R)-pantothenate biosynthesis; (R)-pantoate from 3-methyl-2-oxobutanoate: step 1/2. Functionally, catalyzes the reversible reaction in which hydroxymethyl group from 5,10-methylenetetrahydrofolate is transferred onto alpha-ketoisovalerate to form ketopantoate. The sequence is that of 3-methyl-2-oxobutanoate hydroxymethyltransferase from Neisseria meningitidis serogroup B (strain ATCC BAA-335 / MC58).